The primary structure comprises 361 residues: UDP-3-O-acylglucosamine N-acyltransferase (361 aa).

Catalysis depends on His258, which acts as the Proton acceptor.

This sequence belongs to the transferase hexapeptide repeat family. LpxD subfamily. Homotrimer.

It carries out the reaction a UDP-3-O-[(3R)-3-hydroxyacyl]-alpha-D-glucosamine + a (3R)-hydroxyacyl-[ACP] = a UDP-2-N,3-O-bis[(3R)-3-hydroxyacyl]-alpha-D-glucosamine + holo-[ACP] + H(+). It functions in the pathway bacterial outer membrane biogenesis; LPS lipid A biosynthesis. Catalyzes the N-acylation of UDP-3-O-acylglucosamine using 3-hydroxyacyl-ACP as the acyl donor. Is involved in the biosynthesis of lipid A, a phosphorylated glycolipid that anchors the lipopolysaccharide to the outer membrane of the cell. The protein is UDP-3-O-acylglucosamine N-acyltransferase of Nitrobacter hamburgensis (strain DSM 10229 / NCIMB 13809 / X14).